Consider the following 1158-residue polypeptide: Protein transport protein Sec31B (1158 aa).

7 WD repeats span residues 4-47, 65-110, 119-159, 166-206, 209-254, 258-298, and 301-341; these read KELE…EIFE, VSSR…SSGK, KHTG…VPMT, NPPE…PIIK, SHSS…SPLK, SHSR…VVYK, and TQSS…WEAQ. A WD 8; interaction with SEC13 repeat occupies 376–407; that stretch reads SFAFGGKLVTFGLPSIPVQPVAQACSRPVFIS. Disordered regions lie at residues 485–520, 797–843, and 968–1010; these read LKSD…HTAK, TSSY…SSDH, and GPQD…PEPQ. The segment covering 822–840 has biased composition (low complexity); the sequence is QPSSVMPFSPSQPSPSQGS.

It belongs to the WD repeat SEC31 family. In terms of assembly, COPII is composed of at least 5 proteins: the SEC23/24 complex, the SEC13/31 complex and SAR1. SEC13 and SEC31 make a 2:2 tetramer that forms the edge element of the COPII outer coat. The tetramer self-assembles in multiple copies to form the complete polyhedral cage. Interacts (via WD 8) with SEC13. Interacts with SEC31A. In terms of processing, monoubiquitinated by the BCR(KLHL12) E3 ubiquitin ligase complex, leading to regulate the size of COPII coats.

It is found in the cytoplasm. The protein localises to the cytoplasmic vesicle. It localises to the COPII-coated vesicle membrane. The protein resides in the endoplasmic reticulum membrane. As a component of the coat protein complex II (COPII), may function in vesicle budding and cargo export from the endoplasmic reticulum. The sequence is that of Protein transport protein Sec31B (Sec31b) from Mus musculus (Mouse).